A 301-amino-acid polypeptide reads, in one-letter code: Porphobilinogen deaminase (301 aa).

Position 240 is an S-(dipyrrolylmethanemethyl)cysteine (C240).

It belongs to the HMBS family. As to quaternary structure, monomer. The cofactor is dipyrromethane.

The enzyme catalyses 4 porphobilinogen + H2O = hydroxymethylbilane + 4 NH4(+). It functions in the pathway porphyrin-containing compound metabolism; protoporphyrin-IX biosynthesis; coproporphyrinogen-III from 5-aminolevulinate: step 2/4. Its function is as follows. Tetrapolymerization of the monopyrrole PBG into the hydroxymethylbilane pre-uroporphyrinogen in several discrete steps. In Clostridioides difficile (strain 630) (Peptoclostridium difficile), this protein is Porphobilinogen deaminase.